The sequence spans 634 residues: Chaperone protein HtpG (634 aa).

The a; substrate-binding stretch occupies residues 1–344 (MSETVSQNKE…SNDLPLNVSR (344 aa)). Positions 345 to 561 (EILQDNKVTQ…DYEMGTQMAK (217 aa)) are b. A c region spans residues 562 to 634 (LLAAAGQAVP…GAINKLLTKV (73 aa)).

The protein belongs to the heat shock protein 90 family. Homodimer.

It is found in the cytoplasm. Its function is as follows. Molecular chaperone. Has ATPase activity. The sequence is that of Chaperone protein HtpG from Vibrio parahaemolyticus serotype O3:K6 (strain RIMD 2210633).